The sequence spans 155 residues: Ribosomal RNA large subunit methyltransferase H (155 aa).

S-adenosyl-L-methionine-binding positions include Leu72, Gly103, and 122–127; that span reads LGRMVW.

The protein belongs to the RNA methyltransferase RlmH family. In terms of assembly, homodimer.

It localises to the cytoplasm. It carries out the reaction pseudouridine(1915) in 23S rRNA + S-adenosyl-L-methionine = N(3)-methylpseudouridine(1915) in 23S rRNA + S-adenosyl-L-homocysteine + H(+). Its function is as follows. Specifically methylates the pseudouridine at position 1915 (m3Psi1915) in 23S rRNA. The polypeptide is Ribosomal RNA large subunit methyltransferase H (Cereibacter sphaeroides (strain KD131 / KCTC 12085) (Rhodobacter sphaeroides)).